A 380-amino-acid polypeptide reads, in one-letter code: Erythronate-4-phosphate dehydrogenase (380 aa).

Substrate-binding residues include S45 and T66. Residues 126 to 127 (QV), D146, T175, 206 to 208 (ASR), and D232 each bind NAD(+). Residue R208 is part of the active site. E237 is an active-site residue. The Proton donor role is filled by H254. Residue G257 coordinates NAD(+). Y258 contributes to the substrate binding site.

It belongs to the D-isomer specific 2-hydroxyacid dehydrogenase family. PdxB subfamily. Homodimer.

It is found in the cytoplasm. It carries out the reaction 4-phospho-D-erythronate + NAD(+) = (R)-3-hydroxy-2-oxo-4-phosphooxybutanoate + NADH + H(+). It participates in cofactor biosynthesis; pyridoxine 5'-phosphate biosynthesis; pyridoxine 5'-phosphate from D-erythrose 4-phosphate: step 2/5. Functionally, catalyzes the oxidation of erythronate-4-phosphate to 3-hydroxy-2-oxo-4-phosphonooxybutanoate. In Pseudomonas paraeruginosa (strain DSM 24068 / PA7) (Pseudomonas aeruginosa (strain PA7)), this protein is Erythronate-4-phosphate dehydrogenase.